A 278-amino-acid chain; its full sequence is Juvenile hormone acid O-methyltransferase (278 aa).

The protein belongs to the methyltransferase superfamily. In terms of tissue distribution, specifically expressed in the corpora allata (CA).

The enzyme catalyses (2E,6E)-farnesoate + S-adenosyl-L-methionine = methyl (2E,6E)-farnesoate + S-adenosyl-L-homocysteine. The catalysed reaction is juvenile hormone III carboxylate + S-adenosyl-L-methionine = juvenile hormone III + S-adenosyl-L-homocysteine. Its function is as follows. O-methyltransferase that transfers a methyl group from S-adenosyl-L-methionine (SAM) to the carboxyl group of juvenile hormone acids to produce active juvenile hormones in the corpora allata, the last step during juvenile hormone biosynthesis. Also able to methylate farnesoate to methyl farnesoate. The chain is Juvenile hormone acid O-methyltransferase from Bombyx mori (Silk moth).